A 338-amino-acid chain; its full sequence is Ketol-acid reductoisomerase (NADP(+)) (338 aa).

Residues 1-181 (MNVYYDKDCD…GGGRSGIIET (181 aa)) enclose the KARI N-terminal Rossmann domain. Residues 24–27 (YGSQ), arginine 47, serine 50, serine 52, and 82–85 (DEFQ) each bind NADP(+). The active site involves histidine 107. Glycine 133 provides a ligand contact to NADP(+). The KARI C-terminal knotted domain occupies 182–327 (TFKDETETDL…AKLRGMMPWI (146 aa)). 4 residues coordinate Mg(2+): aspartate 190, glutamate 194, glutamate 226, and glutamate 230. Residue serine 251 participates in substrate binding.

It belongs to the ketol-acid reductoisomerase family. Mg(2+) serves as cofactor.

The enzyme catalyses (2R)-2,3-dihydroxy-3-methylbutanoate + NADP(+) = (2S)-2-acetolactate + NADPH + H(+). It carries out the reaction (2R,3R)-2,3-dihydroxy-3-methylpentanoate + NADP(+) = (S)-2-ethyl-2-hydroxy-3-oxobutanoate + NADPH + H(+). The protein operates within amino-acid biosynthesis; L-isoleucine biosynthesis; L-isoleucine from 2-oxobutanoate: step 2/4. It participates in amino-acid biosynthesis; L-valine biosynthesis; L-valine from pyruvate: step 2/4. Functionally, involved in the biosynthesis of branched-chain amino acids (BCAA). Catalyzes an alkyl-migration followed by a ketol-acid reduction of (S)-2-acetolactate (S2AL) to yield (R)-2,3-dihydroxy-isovalerate. In the isomerase reaction, S2AL is rearranged via a Mg-dependent methyl migration to produce 3-hydroxy-3-methyl-2-ketobutyrate (HMKB). In the reductase reaction, this 2-ketoacid undergoes a metal-dependent reduction by NADPH to yield (R)-2,3-dihydroxy-isovalerate. The polypeptide is Ketol-acid reductoisomerase (NADP(+)) (Psychrobacter arcticus (strain DSM 17307 / VKM B-2377 / 273-4)).